A 193-amino-acid chain; its full sequence is Thymidine kinase (193 aa).

ATP is bound by residues 9-16 (STMNAGKS) and 87-90 (DEAQ). E88 functions as the Proton acceptor in the catalytic mechanism. The Zn(2+) site is built by C145, C147, C182, and H185.

Belongs to the thymidine kinase family. Homotetramer.

The protein localises to the cytoplasm. The catalysed reaction is thymidine + ATP = dTMP + ADP + H(+). The chain is Thymidine kinase from Haemophilus influenzae (strain 86-028NP).